We begin with the raw amino-acid sequence, 466 residues long: Clusterin-like protein 1 (466 aa).

A signal peptide spans 1–20 (MKPPLLVFIVCLLWLKDSHC). Residues 57 to 111 (KQMKIMMERKEKEHTNLMSTLKKCREEKQEALKLLNEVQEHLEEEERLCRESLAD) are a coiled coil. 5 cysteine pairs are disulfide-bonded: C105/C333, C116/C325, C119/C322, C124/C315, and C131/C305. N-linked (GlcNAc...) asparagine glycosylation is found at N196, N257, N311, N351, N412, and N431.

Belongs to the clusterin family.

Its subcellular location is the secreted. The protein is Clusterin-like protein 1 (CLUL1) of Homo sapiens (Human).